A 90-amino-acid chain; its full sequence is Iron oxidase (90 aa).

The tat-type signal signal peptide spans Met1–Ala37. [4Fe-4S] cluster is bound by residues Cys57, Cys60, Cys69, and Cys82.

Belongs to the high-potential iron-sulfur protein (HiPIP) family. Homomultimer. Post-translationally, predicted to be exported by the Tat system. The position of the signal peptide cleavage has been experimentally proven.

The protein localises to the periplasm. Its function is as follows. Catalyzes the oxidation of Fe(2+) to Fe(3+) coupled to cytochrome c552 reduction. This is Iron oxidase (iro) from Acidithiobacillus ferrooxidans (Thiobacillus ferrooxidans).